We begin with the raw amino-acid sequence, 312 residues long: Malate dehydrogenase (312 aa).

Residues 12–17 (GAGFTG) and Asp36 each bind NAD(+). The substrate site is built by Arg87 and Arg93. NAD(+) contacts are provided by residues Asn100 and 123–125 (LTN). Substrate is bound at residue Asn125. Ser149 is modified (phosphoserine). Substrate is bound at residue Arg156. His180 acts as the Proton acceptor in catalysis.

This sequence belongs to the LDH/MDH superfamily. MDH type 3 family.

The catalysed reaction is (S)-malate + NAD(+) = oxaloacetate + NADH + H(+). Its function is as follows. Catalyzes the reversible oxidation of malate to oxaloacetate. This chain is Malate dehydrogenase, found in Bacillus cytotoxicus (strain DSM 22905 / CIP 110041 / 391-98 / NVH 391-98).